The chain runs to 392 residues: p21-activated protein kinase-interacting protein 1 (392 aa).

WD repeat units lie at residues 33–72 (VADFTHHAHTASLSAVAVNSRFVVTGSKDETIHIYDMKKK), 73–113 (IEHG…AKKW), 114–155 (ECLK…LVEG), 156–195 (RSAFIKNIKQNAHIVEWSPRGEQYVVIIQNKIDIYQLDTA), 196–235 (SISGTITNEKRISSVKFLSESVLAVAGDEEVIRFFDCDSL), and 236–275 (VCLCEFKAHENRVKDMFSFEIPEHHVIVSASSDGFIKMWK). A disordered region spans residues 312–392 (SLPPAAEPSP…RKKKKIKTMQ (81 aa)). Ser320 carries the phosphoserine modification. A compositionally biased stretch (basic and acidic residues) spans 325-345 (EQSKIGKKEPGDTVHKEEKRS). A compositionally biased stretch (basic residues) spans 381–392 (KKRKKKKIKTMQ).

In terms of assembly, interacts with PAK1. Expressed in brain, colon, heart, kidney, liver, lung, muscle, peripheral blood leukocytes, placenta, small intestine, spleen and thymus.

It is found in the nucleus. The protein localises to the nucleolus. Negatively regulates the PAK1 kinase. PAK1 is a member of the PAK kinase family, which has been shown to play a positive role in the regulation of signaling pathways involving MAPK8 and RELA. PAK1 exists as an inactive homodimer, which is activated by binding of small GTPases such as CDC42 to an N-terminal regulatory domain. PAK1IP1 also binds to the N-terminus of PAK1, and inhibits the specific activation of PAK1 by CDC42. May be involved in ribosomal large subunit assembly. In Homo sapiens (Human), this protein is p21-activated protein kinase-interacting protein 1 (PAK1IP1).